We begin with the raw amino-acid sequence, 99 residues long: Plastocyanin (99 aa).

Positions 1–99 constitute a Plastocyanin-like domain; the sequence is IEVLLGGGDG…AGMVGKVTVN (99 aa). Cu cation contacts are provided by His-37, Cys-84, His-87, and Met-92.

This sequence belongs to the plastocyanin family. Cu(2+) is required as a cofactor.

It localises to the plastid. It is found in the chloroplast thylakoid membrane. Functionally, participates in electron transfer between P700 and the cytochrome b6-f complex in photosystem I. This Capsella bursa-pastoris (Shepherd's purse) protein is Plastocyanin (PETE).